Here is a 427-residue protein sequence, read N- to C-terminus: Hydroxylamine reductase (427 aa).

Positions 3, 6, 15, and 21 each coordinate [4Fe-4S] cluster. 8 residues coordinate hybrid [4Fe-2O-2S] cluster: H129, E153, C197, C283, C311, C336, E370, and K372. C283 carries the post-translational modification Cysteine persulfide.

This sequence belongs to the HCP family. Requires [4Fe-4S] cluster as cofactor. Hybrid [4Fe-2O-2S] cluster is required as a cofactor.

Its subcellular location is the cytoplasm. It carries out the reaction A + NH4(+) + H2O = hydroxylamine + AH2 + H(+). In terms of biological role, catalyzes the reduction of hydroxylamine to form NH(3) and H(2)O. The sequence is that of Hydroxylamine reductase from Moorella thermoacetica (strain ATCC 39073 / JCM 9320).